The chain runs to 171 residues: MSDFKRSKANNNTEELIEKIVFINRVAKVVKGGRRFSFSAIVVVGDGNGKVGYGLGKANQVPEAIRKGVERARKDMALVSLTDVSIPHQVIGHYGAGRVFLRPASAGTGLIAGGPVRAVLEAAGVSNILTKCLGSHNPHNMVKATIDGLKQLRSAQKIAELRGKNVEEITA.

Positions 16–79 constitute an S5 DRBM domain; it reads LIEKIVFINR…ERARKDMALV (64 aa).

This sequence belongs to the universal ribosomal protein uS5 family. In terms of assembly, part of the 30S ribosomal subunit. Contacts proteins S4 and S8.

Its function is as follows. With S4 and S12 plays an important role in translational accuracy. Functionally, located at the back of the 30S subunit body where it stabilizes the conformation of the head with respect to the body. This Desulfotalea psychrophila (strain LSv54 / DSM 12343) protein is Small ribosomal subunit protein uS5.